The primary structure comprises 154 residues: Lipoprotein signal peptidase (154 aa).

Helical transmembrane passes span 8–28 (LYLI…NYIV), 58–78 (IFSG…AVVI), and 88–108 (NGLF…NFID). Catalysis depends on residues aspartate 117 and aspartate 133. A helical transmembrane segment spans residues 131–151 (IADSAITVGIILVFIYLIFIS).

This sequence belongs to the peptidase A8 family.

Its subcellular location is the cell membrane. The catalysed reaction is Release of signal peptides from bacterial membrane prolipoproteins. Hydrolyzes -Xaa-Yaa-Zaa-|-(S,diacylglyceryl)Cys-, in which Xaa is hydrophobic (preferably Leu), and Yaa (Ala or Ser) and Zaa (Gly or Ala) have small, neutral side chains.. It functions in the pathway protein modification; lipoprotein biosynthesis (signal peptide cleavage). This protein specifically catalyzes the removal of signal peptides from prolipoproteins. In Lactobacillus johnsonii (strain CNCM I-12250 / La1 / NCC 533), this protein is Lipoprotein signal peptidase.